A 388-amino-acid polypeptide reads, in one-letter code: Fibrinogen- and Ig-binding protein (388 aa).

The N-terminal stretch at 1 to 41 (MSKTNPNKLYSLRKLKTGTASVAVDLTVLGTGLANTTDVKA) is a signal peptide. D repeat units follow at residues 288–293 (EKLEAE), 294–299 (AKALKE), 302–307 (AKQAEE), and 309–314 (AKLKAD). The tract at residues 308–362 (LAKLKADKASGAQKPDTKPGNKEVPTRPSQTRTNTNKAPMAQTKRQLPSTGEETT) is disordered. Residues 322–332 (PDTKPGNKEVP) show a composition bias toward basic and acidic residues. The span at 334–362 (RPSQTRTNTNKAPMAQTKRQLPSTGEETT) shows a compositional bias: polar residues. The LPXTG sorting signal signature appears at 354-358 (LPSTG). Residue T357 is modified to Pentaglycyl murein peptidoglycan amidated threonine. Residues 358-388 (GEETTNPFFTAAALTVIASAGVLALKRKEEN) constitute a propeptide, removed by sortase.

It is found in the secreted. It localises to the cell wall. In terms of biological role, binds IgG molecules of the Ig1, Ig2 and Ig4 subclasses, and also binds fibrinogen. This is Fibrinogen- and Ig-binding protein (mrp4) from Streptococcus pyogenes.